The primary structure comprises 1030 residues: F-box/WD repeat-containing protein 10 (1030 aa).

An F-box domain is found at 280–329 (RDFIRDLPLHLSKYILRMLDKHSLNRCIFVSQHWATLAQQVKVDQSMHSF). WD repeat units lie at residues 466–505 (GHAGSVRALFLSEEDNILLSGSYDLSIRYWDVKTGACVRI), 508–547 (GHQGTITCLDVYKNRLVSGAKDGQVKEWDIETGKCLKTFK), 549–584 (KDPILAAKISETYIVSSCERGIVKVWHVVTAQLQKT), 587–624 (GHEGAVKCLFFNEWHLVSGGADGLVMAWSMVGKYERCL), and 626–667 (AFKH…KVIK). Positions 709–773 (KNKVKKSKDK…LSSDDMETPV (65 aa)) are disordered. Residues 716–733 (KDKEEEREETSLGDEHSR) are compositionally biased toward basic and acidic residues. A compositionally biased stretch (polar residues) spans 734–749 (STIQGHSLKDSVSSKQ). Residues 963–992 (FMLMTVKEEKEFAEAKMKEYEASVSTKEVD) are a coiled coil.

In terms of biological role, probable substrate-recognition component of a SCF (SKP1-CUL1-F-box protein)-type E3 ubiquitin ligase complex which mediates the ubiquitination and subsequent proteasomal degradation of target proteins. Overexpression is leading to degradation of CBX5 and CBX1. This chain is F-box/WD repeat-containing protein 10 (Fbxw10), found in Mus musculus (Mouse).